Here is a 969-residue protein sequence, read N- to C-terminus: RNA polymerase-associated protein RapA (969 aa).

Positions 162–339 (EVGQRVAPRV…FARLALLDAD (178 aa)) constitute a Helicase ATP-binding domain. Residue 175–182 (DEVGLGKT) participates in ATP binding. Positions 285 to 288 (DEAH) match the DEAH box motif. A Helicase C-terminal domain is found at 492–663 (RIEWLITFLK…GFLKNPQAVG (172 aa)).

The protein belongs to the SNF2/RAD54 helicase family. RapA subfamily. In terms of assembly, interacts with the RNAP. Has a higher affinity for the core RNAP than for the holoenzyme. Its ATPase activity is stimulated by binding to RNAP.

Functionally, transcription regulator that activates transcription by stimulating RNA polymerase (RNAP) recycling in case of stress conditions such as supercoiled DNA or high salt concentrations. Probably acts by releasing the RNAP, when it is trapped or immobilized on tightly supercoiled DNA. Does not activate transcription on linear DNA. Probably not involved in DNA repair. The protein is RNA polymerase-associated protein RapA of Actinobacillus pleuropneumoniae serotype 7 (strain AP76).